The primary structure comprises 2474 residues: Highly reducing polyketide synthase 40 (2474 aa).

The Ketosynthase family 3 (KS3) domain occupies 1-294; that stretch reads MFKETEIQQR…GSNAHIIIDD (294 aa). Catalysis depends on for beta-ketoacyl synthase activity residues Cys-42, His-177, and His-217. Positions 459–798 constitute a Malonyl-CoA:ACP transacylase (MAT) domain; it reads FVFTGQGAQW…GYESVLRRGT (340 aa). Residues 864–998 are N-terminal hotdog fold; the sequence is HELLGAPVPD…GLVVTEYEQP (135 aa). Positions 864–1182 constitute a PKS/mFAS DH domain; it reads HELLGAPVPD…ITTVARSEGA (319 aa). The active-site Proton acceptor; for dehydratase activity is the His-896. The interval 1027–1182 is C-terminal hotdog fold; the sequence is KVETSFRQLY…ITTVARSEGA (156 aa). Catalysis depends on Asp-1093, which acts as the Proton donor; for dehydratase activity. A methyltransferase (CMet) domain region spans residues 1232–1535; sequence VEMMCFLYIK…DLHIYDFPDH (304 aa). One can recognise an Enoyl reductase (ER) domain in the interval 1770–2063; the sequence is GLLDSLQFQD…SGSHMGKLVL (294 aa). A Ketoreductase (KR) domain is found at 2087 to 2263; the sequence is ASYLLSGGLG…PGVAVDLGMI (177 aa). Residues 2385 to 2462 enclose the Carrier domain; sequence DAAKIVSAAI…ELAELAAKRS (78 aa). Ser-2422 carries the O-(pantetheine 4'-phosphoryl)serine modification.

Pantetheine 4'-phosphate serves as cofactor.

It participates in secondary metabolite biosynthesis. Functionally, highly reducing polyketide synthase; part of the gene cluster that mediates the biosynthesis of the gamma-pyrones fusapyrone (FPY) and deoxyfusapyrone (dFPY). FPY is an undecaketide and thus likely synthesized by the polyketide synthase FPY1 from acetyl-CoA functioning as starter unit and the addition of 10 malonyl-CoA extender units by successive Claisen-condensations. Next to this, FPY shares some rare features: C-glycosylated 4-deoxyglucose at C-3, a gem-dimethyl group at C-13, and an alpha-beta to beta-gamma double bond shift at C-20. During FPY biosynthesis mono-C-methyl groups are transferred to the tetra-, penta-, hexa- and heptaketide, while two C-methyl groups are transferred to the nonaketide, suggesting that the CMet domain is programmed to selectively catalyze two successive C-alpha-methylation reactions of the nonaketide, while other alpha-carbons are non- or mono-methylated only. While the origin of the 4'-deoxyglucose moiety remains opaque, its transfer to C-3 is most likely mediated by the C-glycosyltransferase FPY2. Next to this, the hydroxyl group present at C-33 and discriminating between FPY and dFPY, is likely to be installed by the cytochrome P450 monooxygenase FPY7. No putative function can be predicted for the remaining genes FPY3-FPY6. The chain is Highly reducing polyketide synthase 40 from Fusarium mangiferae (Mango malformation disease fungus).